We begin with the raw amino-acid sequence, 307 residues long: MNYLEFEVIWGVNNIYSILELKSKLIYEGIFKGKILETGCKEYSPLVPGDIVLGYVYGSRKVYIDKRVSRKNILWRYNRKVDLRQAIVSNVDNVLIVNSANFPEMKNFFIDRVLVVAEEQNIVPVIVINKIDKGISQRVEEFSEIYKNLGYRVLKTSVKTFEGIKEVKEILRNSRTSFIGQSGVGKSSLINLIDSRASQSVNEISEKYSRGKHTTVYSISFHSENWIIVDTPGIKEFGVETLPFENLKYYFKEFENFASFCKYKSCLHVSEPHCSVTNSLGNGISKPRYESYLKILSELKNYKNYAK.

The 158-residue stretch at 80 to 237 folds into the CP-type G domain; it reads KVDLRQAIVS…IVDTPGIKEF (158 aa). Residues 129 to 132 and 180 to 188 each bind GTP; these read NKID and GQSGVGKSS. Zn(2+) contacts are provided by cysteine 261, cysteine 266, histidine 268, and cysteine 274.

It belongs to the TRAFAC class YlqF/YawG GTPase family. RsgA subfamily. In terms of assembly, monomer. Associates with 30S ribosomal subunit, binds 16S rRNA. Zn(2+) is required as a cofactor.

The protein resides in the cytoplasm. Its function is as follows. One of several proteins that assist in the late maturation steps of the functional core of the 30S ribosomal subunit. Helps release RbfA from mature subunits. May play a role in the assembly of ribosomal proteins into the subunit. Circularly permuted GTPase that catalyzes slow GTP hydrolysis, GTPase activity is stimulated by the 30S ribosomal subunit. The polypeptide is Small ribosomal subunit biogenesis GTPase RsgA (Borrelia garinii subsp. bavariensis (strain ATCC BAA-2496 / DSM 23469 / PBi) (Borreliella bavariensis)).